The primary structure comprises 277 residues: 4-hydroxy-3-methylbut-2-enyl diphosphate reductase (277 aa).

A [4Fe-4S] cluster-binding site is contributed by C12. (2E)-4-hydroxy-3-methylbut-2-enyl diphosphate is bound by residues H36 and H70. Dimethylallyl diphosphate-binding residues include H36 and H70. Isopentenyl diphosphate is bound by residues H36 and H70. C92 serves as a coordination point for [4Fe-4S] cluster. Residue H120 coordinates (2E)-4-hydroxy-3-methylbut-2-enyl diphosphate. H120 is a binding site for dimethylallyl diphosphate. An isopentenyl diphosphate-binding site is contributed by H120. Residue E122 is the Proton donor of the active site. A (2E)-4-hydroxy-3-methylbut-2-enyl diphosphate-binding site is contributed by T160. C188 contributes to the [4Fe-4S] cluster binding site. Residues S216, S217, N218, and S260 each coordinate (2E)-4-hydroxy-3-methylbut-2-enyl diphosphate. Dimethylallyl diphosphate-binding residues include S216, S217, N218, and S260. Residues S216, S217, N218, and S260 each coordinate isopentenyl diphosphate.

Belongs to the IspH family. Requires [4Fe-4S] cluster as cofactor.

The enzyme catalyses isopentenyl diphosphate + 2 oxidized [2Fe-2S]-[ferredoxin] + H2O = (2E)-4-hydroxy-3-methylbut-2-enyl diphosphate + 2 reduced [2Fe-2S]-[ferredoxin] + 2 H(+). The catalysed reaction is dimethylallyl diphosphate + 2 oxidized [2Fe-2S]-[ferredoxin] + H2O = (2E)-4-hydroxy-3-methylbut-2-enyl diphosphate + 2 reduced [2Fe-2S]-[ferredoxin] + 2 H(+). It participates in isoprenoid biosynthesis; dimethylallyl diphosphate biosynthesis; dimethylallyl diphosphate from (2E)-4-hydroxy-3-methylbutenyl diphosphate: step 1/1. It functions in the pathway isoprenoid biosynthesis; isopentenyl diphosphate biosynthesis via DXP pathway; isopentenyl diphosphate from 1-deoxy-D-xylulose 5-phosphate: step 6/6. Functionally, catalyzes the conversion of 1-hydroxy-2-methyl-2-(E)-butenyl 4-diphosphate (HMBPP) into a mixture of isopentenyl diphosphate (IPP) and dimethylallyl diphosphate (DMAPP). Acts in the terminal step of the DOXP/MEP pathway for isoprenoid precursor biosynthesis. The polypeptide is 4-hydroxy-3-methylbut-2-enyl diphosphate reductase (Sulfurovum sp. (strain NBC37-1)).